The primary structure comprises 601 residues: Glutathione-regulated potassium-efflux system protein KefB (601 aa).

Transmembrane regions (helical) follow at residues 4-24, 29-49, 55-75, 87-107, 115-135, 152-172, 177-197, 207-227, 230-250, 268-288, 291-311, 324-344, and 356-376; these read SDFL…VPLA, IGAV…GLGF, EILH…GLEL, IFGV…GLLM, AAVV…LQLM, VLLF…LLAG, HFDW…LIGG, FIAA…LVLG, LFMD…GVLL, GLLL…GVLY, LLWV…VLYL, MQFA…FSTA, and ALLL…MKLV. The RCK N-terminal domain occupies 400–519; that stretch reads KPQVIVVGFG…AGVTQFSRET (120 aa).

It belongs to the monovalent cation:proton antiporter 2 (CPA2) transporter (TC 2.A.37) family. KefB subfamily. As to quaternary structure, interacts with the regulatory subunit KefG.

Its subcellular location is the cell inner membrane. Pore-forming subunit of a potassium efflux system that confers protection against electrophiles. Catalyzes K(+)/H(+) antiport. The chain is Glutathione-regulated potassium-efflux system protein KefB from Escherichia coli O1:K1 / APEC.